Reading from the N-terminus, the 112-residue chain is Large ribosomal subunit protein eL22 (112 aa).

The protein belongs to the eukaryotic ribosomal protein eL22 family. In terms of assembly, component of the large ribosomal subunit.

The protein resides in the cytoplasm. This chain is Large ribosomal subunit protein eL22 (RPL22), found in Encephalitozoon cuniculi (strain GB-M1) (Microsporidian parasite).